A 414-amino-acid chain; its full sequence is Arrestin domain-containing protein 3 (414 aa).

Short sequence motifs (PPxY motif) lie at residues 346 to 349 (PPSY) and 391 to 394 (PPLY). The disordered stretch occupies residues 393–414 (LYSEIDPNPDQPADDRPSCPSR). The segment covering 405 to 414 (ADDRPSCPSR) has biased composition (basic and acidic residues).

This sequence belongs to the arrestin family. In terms of assembly, interacts (via PPxY motifs) with NEDD4 (via WW domains). Interacts with ADRB2. Interacts with ADRB3. Interacts with HGS (via PPxY motifs). Does not bind TXN (thioredoxin). Interacts with ITCH.

Its subcellular location is the cytoplasm. It is found in the cell membrane. The protein resides in the lysosome. It localises to the endosome. The protein localises to the early endosome. In terms of biological role, adapter protein that plays a role in regulating cell-surface expression of adrenergic receptors and probably also other G protein-coupled receptors. Plays a role in NEDD4-mediated ubiquitination and endocytosis af activated ADRB2 and subsequent ADRB2 degradation. May recruit NEDD4 to ADRB2. Alternatively, may function as adapter protein that does not play a major role in recruiting NEDD4 to ADRB2, but rather plays a role in a targeting ADRB2 to endosomes. This chain is Arrestin domain-containing protein 3 (ARRDC3), found in Bos taurus (Bovine).